We begin with the raw amino-acid sequence, 29 residues long: Dermaseptin-S5 (29 aa).

This sequence belongs to the frog skin active peptide (FSAP) family. Dermaseptin subfamily. As to expression, expressed by the skin glands.

The protein resides in the secreted. In terms of biological role, potent antimicrobial peptide with activity against bacteria and protozoa. Also has activity against fungi. Probably acts by disturbing membrane functions with its amphipathic structure. This chain is Dermaseptin-S5, found in Phyllomedusa sauvagei (Sauvage's leaf frog).